The sequence spans 483 residues: Acetyltransferase AOL_s00215g273 (483 aa).

The next 8 helical transmembrane spans lie at 9 to 29, 33 to 53, 141 to 161, 191 to 211, 292 to 312, 334 to 354, 372 to 392, and 453 to 473; these read ALIG…TSFV, IYPL…TEGL, VAYI…LYTC, IFQM…SVLV, FLVF…VYYG, VTGY…FICW, WFVG…VLWI, and LGGY…GSGF.

Belongs to the wax synthase family.

The protein resides in the membrane. Its pathway is secondary metabolite biosynthesis; terpenoid biosynthesis. Its function is as follows. Acetyltransferase; part of the gene cluster that mediates the biosynthesis of sesquiterpenyl epoxy-cyclohexenoids (SECs) such as anthrobotrisins and arthrosporols, metabolites that possess a novel hybrid carbon skeleton consisting of a polyketide-derived epoxycyclohexenol combined with a terpenoid-derived monocyclic sesquiterpenol substructure (PKS-PTS hybrid). The SEC pathway plays an important role for fungal soil colonization via decreasing fungal nematode-capturing ability. The role of the acetyltransferase in SEC biosynthesis has still to be determined. The pathway begins with the biosynthesis of 6-methylsalicylic acid (6-MSA), the first precursor of the polyketide-derived epoxycyclohexenol in arthrosporols, by the polyketide synthase (PKS) AOL_s00215g283 via condensation of 1 acetate and 3 malonate units. The 6-methylsalicylic acid decarboxylase AOL_s00215g281 then catalyzes the decarboxylation of 6-methylsalicylic acid to yield m-cresol. The cytochrome P450 monooxygenase AOL_s00215g282 further oxidizes m-cresol to yield toluquinol. With the assistance of the oxidoreductase AOL_s00215g277, the polyprenyl transferase AOL_s00215g276 catalyzes the farnesylation of toluquinol to produce farnesyl hydroquinone, the hybrid precursor for biosynthesis of SECs. Farnesyl hydroquinone undergoes epoxidation and then subsequent dehydrogenation to form farnesyl epoxy-quinone, the first and simplest SEC. The cytochrome P450 monooxygenase AOL_s00215g278 and the FAD-dependent monooxygenase AOL_s00215g279 might be involved in the oxygenation of the phenol moiety, most likely in the epoxy formation. The cytochrome P450 monooxygenases AOL_s00215g274 and AOL_s00215g280 are involved in specific regional ketone reductions at respectively C-4 and C-1 of farnesyl epoxy-quinone PubMed:33823587. This Arthrobotrys oligospora (strain ATCC 24927 / CBS 115.81 / DSM 1491) (Nematode-trapping fungus) protein is Acetyltransferase AOL_s00215g273.